Reading from the N-terminus, the 353-residue chain is MALIRHCVTLLLILCCSRLCGAIQWLGLTVNGSRVAWNESEHCRLLDGLVPEQSQLCKRNLELMQSVVNAAKQAKLTCQMTFSDMRWNCSSVENAPNFTPDLSKGTRESAFVYALASATISHTIARACASGELPTCSCGATPAEVPGTGFRWGGCGDNLHYGLNMGSAFVDAPMKSSKSGGTQATKMINLHNNAVGRQVLMDSLETKCKCHGVSGSCSVKTCWKGLQDLPHIANELKSKYLGATKVIHRQTGTRRQLVPRELDIRPVRESELVYLVSSPDYCAKNPKLGSYGTQDRVCNKTSVGSDSCNLMCCGRGYNAYTETIVERCQCKYYWCCYVMCKKCERTVERYVCK.

A signal peptide spans 1–22; it reads MALIRHCVTLLLILCCSRLCGA. 3 N-linked (GlcNAc...) asparagine glycosylation sites follow: asparagine 31, asparagine 38, and asparagine 88. 5 cysteine pairs are disulfide-bonded: cysteine 78–cysteine 89, cysteine 128–cysteine 136, cysteine 138–cysteine 155, cysteine 208–cysteine 222, and cysteine 210–cysteine 217. Serine 214 carries O-palmitoleoyl serine; by PORCN lipidation. Tyrosine 274 and tyrosine 281 each carry sulfotyrosine. Disulfide bonds link cysteine 282–cysteine 313, cysteine 298–cysteine 308, cysteine 312–cysteine 352, cysteine 328–cysteine 343, cysteine 330–cysteine 340, and cysteine 335–cysteine 336. A glycan (N-linked (GlcNAc...) asparagine) is linked at asparagine 299.

The protein belongs to the Wnt family. As to quaternary structure, homodimer. Secreted homodimers form a complex with wnt5a homodimers; tyrosine sulfation of both wnt11 and wnt5a by tpst1 is required for this interaction. Interacts with the transmembrane receptor fzd7/fz7. Interacts with lrp6 and ryk. Interacts with tdgf1/frl1. Interacts weakly with frzb1 and strongly with frzb2/crescent. Interaction with frzb2/crescent antagonizes wnt11 function in the neuroectoderm, but enhances it in mesodermal tissue. Post-translationally, glycosylation is required for protein secretion. Palmitoleoylation is required for efficient binding to frizzled receptors. Depalmitoleoylation leads to Wnt signaling pathway inhibition.

It is found in the secreted. It localises to the extracellular space. The protein localises to the extracellular matrix. In terms of biological role, ligand for the frizzled7 transmembrane receptor. Primarily acts via non-canonical Wnt pathways mediated by either Ca(2+) and PKC, or by JNK and dvl2/dsh. Depending on the cellular context, can also signal via the canonical Wnt pathway mediated by beta-catenin and dvl2/dsh. May also inhibit canonical Wnt signaling. Maternally initiates dorsal/ventral axis formation by a canonical route, which signals via lrp6. In a complex with wnt5a, activates the canonical and non-canonical processes involved in axis formation. In the non-canonical pathway, acts through fzd7/fz7 to induce phosphorylation of dvl2/dsh. Signals through a non-canonical Wnt pathway to regulate convergent extension movements during gastrulation. Interactions with the secreted Wnt antagonist sfrp5 to coordinate foregut development, acting via a non-canonical wnt pathway whereby sfrp5 restricts wnt11b activity to prevent inappropriate foregut formation. Mediates cardiogenesis via non-canonical Wnt signaling involving JNK-activation and PKC. Acts redundantly with wnt11/wnt11r during pronephros induction. The protein is Protein Wnt-11b-2 of Xenopus tropicalis (Western clawed frog).